A 65-amino-acid chain; its full sequence is Large ribosomal subunit protein bL35 (65 aa).

It belongs to the bacterial ribosomal protein bL35 family.

The polypeptide is Large ribosomal subunit protein bL35 (Sodalis glossinidius (strain morsitans)).